Consider the following 636-residue polypeptide: Chaperone protein DnaK (636 aa).

Position 203 is a phosphothreonine; by autocatalysis (Thr-203). Residues 602–636 are disordered; sequence VYGKQQEGAPAQEEPSAEGKKADDEGTVEGEFREV. Positions 618–636 are enriched in basic and acidic residues; that stretch reads AEGKKADDEGTVEGEFREV.

It belongs to the heat shock protein 70 family.

In terms of biological role, acts as a chaperone. The sequence is that of Chaperone protein DnaK from Dehalococcoides mccartyi (strain CBDB1).